The chain runs to 759 residues: uncharacterized protein (759 aa).

Low complexity-rich tracts occupy residues 1–36 (MSSNNNFDNNKNNNNNNNSNQNNNNIDNGGNNNETN), 142–211 (QQQN…NQHH), and 221–347 (NHSN…GSSS). Disordered regions lie at residues 1–47 (MSSN…AQTP), 142–380 (QQQN…PSIG), 409–428 (NNNCTESNDDDSPLNGGLGY), 463–504 (IING…NFEN), and 654–759 (LVDD…YLNK). Over residues 348–360 (PFQDQARSPSSSF) the composition is skewed to polar residues. 2 stretches are compositionally biased toward low complexity: residues 463-495 (IINGFNKNNNNNNNNNNNNNNSNNNNNNNGNNN) and 660-747 (HISN…DNNN).

This is an uncharacterized protein from Dictyostelium discoideum (Social amoeba).